Reading from the N-terminus, the 374-residue chain is Formylglycine-generating enzyme (374 aa).

An N-terminal signal peptide occupies residues 1-33; that stretch reads MAAPALGPARGCGAELTLVLLLSLFLLLGWAAG. Cysteines 50 and 52 form a disulfide. The interval 57-102 is disordered; that stretch reads RPGAQGSSAAAHRYSREANAPGSVPGGRPSPPTKMVPIPAGVFTMG. Glu-130 contacts Ca(2+). The N-linked (GlcNAc...) asparagine glycan is linked to Asn-141. 2 disulfides stabilise this stretch: Cys-218-Cys-365 and Cys-235-Cys-346. Ca(2+) contacts are provided by Asn-259, Ile-260, Asp-273, Phe-275, Asn-293, Gly-296, Ala-298, and Glu-300. The Cu(2+) site is built by Cys-336 and Cys-341. The segment at 341–360 is interaction with sulfatases; the sequence is CYRYRCAARSQNTPDSSASN.

The protein belongs to the sulfatase-modifying factor family. Monomer, homodimer and heterodimer with SUMF2. Requires Cu(2+) as cofactor. N-glycosylated. Contains high-mannose-type oligosaccharides.

The protein resides in the endoplasmic reticulum lumen. It catalyses the reaction L-cysteinyl-[sulfatase] + 2 a thiol + O2 = an organic disulfide + 3-oxo-L-alanyl-[sulfatase] + hydrogen sulfide + H2O + H(+). It participates in protein modification; sulfatase oxidation. Oxidase that catalyzes the conversion of cysteine to 3-oxoalanine on target proteins, using molecular oxygen and an unidentified reducing agent. 3-oxoalanine modification, which is also named formylglycine (fGly), occurs in the maturation of arylsulfatases and some alkaline phosphatases that use the hydrated form of 3-oxoalanine as a catalytic nucleophile. Known substrates include GALNS, ARSA, STS and ARSE. The sequence is that of Formylglycine-generating enzyme from Bos taurus (Bovine).